A 758-amino-acid chain; its full sequence is GPI ethanolamine phosphate transferase 2 (758 aa).

Asn-28, Asn-77, and Asn-178 each carry an N-linked (GlcNAc...) asparagine glycan. The next 3 membrane-spanning stretches (helical) occupy residues 405–425, 431–451, and 455–472; these read LVAI…FRNL, LLAF…SSFI, and HVIW…QLLN. Asn-493 carries an N-linked (GlcNAc...) asparagine glycan. The next 6 membrane-spanning stretches (helical) occupy residues 533-553, 561-581, 598-618, 667-687, 698-718, and 733-753; these read PSPI…MPII, PIIA…LLLI, LFIL…YDIW, IFAV…WWCL, VKTF…SCFI, and LLYN…ISTI.

Belongs to the PIGG/PIGN/PIGO family. PIGG subfamily.

The protein localises to the endoplasmic reticulum membrane. Its pathway is glycolipid biosynthesis; glycosylphosphatidylinositol-anchor biosynthesis. In terms of biological role, ethanolamine phosphate transferase involved in glycosylphosphatidylinositol-anchor biosynthesis. Transfers ethanolamine phosphate to the GPI second mannose. The sequence is that of GPI ethanolamine phosphate transferase 2 (las21) from Schizosaccharomyces pombe (strain 972 / ATCC 24843) (Fission yeast).